The chain runs to 198 residues: IMP cyclohydrolase (198 aa).

It belongs to the archaeal IMP cyclohydrolase family.

The catalysed reaction is IMP + H2O = 5-formamido-1-(5-phospho-D-ribosyl)imidazole-4-carboxamide. It participates in purine metabolism; IMP biosynthesis via de novo pathway; IMP from 5-formamido-1-(5-phospho-D-ribosyl)imidazole-4-carboxamide: step 1/1. Catalyzes the cyclization of 5-formylamidoimidazole-4-carboxamide ribonucleotide to IMP. The protein is IMP cyclohydrolase of Thermococcus kodakarensis (strain ATCC BAA-918 / JCM 12380 / KOD1) (Pyrococcus kodakaraensis (strain KOD1)).